The chain runs to 86 residues: Conidiation-specific protein 10 (86 aa).

Residues 1 to 11 (MAGTGNDNPGN) show a composition bias toward polar residues. Positions 1–86 (MAGTGNDNPG…SGGTGADDDE (86 aa)) are disordered. Residues 49-58 (SKGGKASSGS) show a composition bias toward low complexity. Residues 62-71 (GSEKAREAGR) show a composition bias toward basic and acidic residues. The segment covering 75–86 (KASGGTGADDDE) has biased composition (gly residues).

It belongs to the con-10 family.

This Neurospora crassa (strain ATCC 24698 / 74-OR23-1A / CBS 708.71 / DSM 1257 / FGSC 987) protein is Conidiation-specific protein 10 (con-10).